The sequence spans 257 residues: Homeobox protein goosecoid (257 aa).

The homeobox DNA-binding region spans 160–219 (KRRHRTIFTDEQLEALENLFQETKYPDVGTREQLARKVHLREEKVEVWFKNRRAKWRRQK). The tract at residues 213-257 (AKWRRQKRSSSEESENAEKWNKTSSSKASPEKREEEGKSDLDSDS) is disordered. Residues 241 to 257 (SPEKREEEGKSDLDSDS) show a composition bias toward basic and acidic residues.

This sequence belongs to the paired homeobox family. Bicoid subfamily.

Its subcellular location is the nucleus. Its function is as follows. Regulates chordin (CHRD). May play a role in spatial programing within discrete embryonic fields or lineage compartments during organogenesis. In concert with NKX3-2, plays a role in defining the structural components of the middle ear; required for the development of the entire tympanic ring. Probably involved in the regulatory networks that define neural crest cell fate specification and determine mesoderm cell lineages in mammals. This Homo sapiens (Human) protein is Homeobox protein goosecoid (GSC).